We begin with the raw amino-acid sequence, 1124 residues long: Anillin (1124 aa).

An N-acetylmethionine modification is found at methionine 1. Positions methionine 1–glutamate 25 are enriched in basic and acidic residues. Residues methionine 1–serine 45 form a required for ubiquitination region. 2 disordered regions span residues methionine 1–isoleucine 113 and alanine 136–valine 196. The interaction with CD2AP stretch occupies residues methionine 1–arginine 155. Positions methionine 1–proline 230 are nuclear localization. 2 positions are modified to phosphoserine: serine 54 and serine 72. The span at valine 77–cysteine 96 shows a compositional bias: polar residues. Serine 97 and serine 102 each carry phosphoserine. Residues serine 97–glutamine 108 show a composition bias toward low complexity. Over residues lysine 148–asparagine 158 the composition is skewed to basic and acidic residues. Phosphoserine occurs at positions 172 and 182. A Phosphothreonine modification is found at threonine 194. Phosphoserine occurs at positions 225 and 252. An interaction with F-actin region spans residues glycine 231–tyrosine 676. Residue lysine 254 forms a Glycyl lysine isopeptide (Lys-Gly) (interchain with G-Cter in SUMO1) linkage. Residue serine 261 is modified to Phosphoserine. Residues threonine 294–aspartate 305 show a composition bias toward polar residues. A disordered region spans residues threonine 294–glycine 328. Residue threonine 320 is modified to Phosphothreonine. Serine 323 and serine 339 each carry phosphoserine. Threonine 364 carries the post-translational modification Phosphothreonine. An N6-acetyllysine modification is found at lysine 371. Residues arginine 380–proline 389 are compositionally biased toward basic and acidic residues. Positions arginine 380–isoleucine 399 are disordered. Residues threonine 397 and threonine 401 each carry the phosphothreonine modification. A phosphoserine mark is found at serine 417, serine 419, serine 449, serine 485, serine 518, serine 553, and serine 561. Residues phenylalanine 569–isoleucine 604 are a coiled coil. Disordered regions lie at residues aspartate 579–aspartate 600 and leucine 625–serine 664. Composition is skewed to basic and acidic residues over residues leucine 631–lysine 644 and proline 654–serine 664. 5 positions are modified to phosphoserine: serine 637, serine 642, serine 658, serine 661, and serine 664. A Phosphotyrosine modification is found at tyrosine 671. Serine 678, serine 688, serine 792, and serine 927 each carry phosphoserine. The localization to the cleavage furrow stretch occupies residues glutamine 730–proline 1124. Positions serine 983–valine 1107 constitute a PH domain.

Interacts with F-actin. Interacts with CD2AP. May interact with RHOA. Interacts with FZR1/CDH1 during mitotic exit. Post-translationally, phosphorylated during mitosis. In terms of processing, ubiquitinated, and this requires FZR1/CDH1. In terms of tissue distribution, ubiquitously expressed. Present at highest levels in the brain, at high levels in the placenta and testis, at intermediate levels in the intestine, ovary, skeletal muscle and thymus and at lower levels in heart, kidney, liver, lung, pancreas, prostate and spleen. In the kidney, it is widely expressed in tubules, but sparsely expressed in the glomerulus. Expression is significantly increased in renal biopsy specimens from idiopathic FSGS. Overexpressed in many tumor types including breast, colorectal, endometrial, hepatic, kidney, lung, ovarian and pancreatic tumors.

It localises to the nucleus. Its subcellular location is the cytoplasm. It is found in the cytoskeleton. The protein localises to the cell cortex. The protein resides in the cell projection. It localises to the bleb. Required for cytokinesis. Essential for the structural integrity of the cleavage furrow and for completion of cleavage furrow ingression. Plays a role in bleb assembly during metaphase and anaphase of mitosis. May play a significant role in podocyte cell migration. This chain is Anillin (ANLN), found in Homo sapiens (Human).